The sequence spans 364 residues: MSGPRAGFYRQELNKTVWEVPQRLQGLRPVGSGAYGSVCSAYDARLRQKVAVKKLSRPFQSLIHARRTYRELRLLKHLKHENVIGLLDVFTPATSIEDFSEVYLVTTLMGADLNNIVKCQALSDEHVQFLVYQLLRGLKYIHSAGIIHRDLKPSNVAVNEDCELRILDFGLARQADEEMTGYVATRWYRAPEIMLNWMHYNQTVDIWSVGCIMAELLQGKALFPGSDYIDQLKRIMEVVGTPSPEVLAKISSEHARTYIQSLPPMPQKDLSSIFRGANPLAIDLLGRMLVLDSDQRVSAAEALAHAYFSQYHDPEDEPEAEPYDESVEAKERTLEEWKELTYQEVLSFKPPEPPKPPGSLEIEQ.

A Protein kinase domain is found at 24–308 (LQGLRPVGSG…AAEALAHAYF (285 aa)). Residues 30 to 38 (VGSGAYGSV) and Lys53 each bind ATP. Glu71 lines the nilotinib pocket. Asp150 functions as the Proton acceptor in the catalytic mechanism. The residue at position 180 (Thr180) is a Phosphothreonine; by MAP2K3, MAP2K4 and MAP2K6. The TXY motif lies at 180–182 (TGY). Position 182 is a phosphotyrosine; by MAP2K3, MAP2K4 and MAP2K6 (Tyr182). Disordered regions lie at residues 311–331 (YHDP…EAKE) and 343–364 (QEVL…EIEQ). Residues 314 to 326 (PEDEPEAEPYDES) show a composition bias toward acidic residues. The residue at position 323 (Tyr323) is a Phosphotyrosine; by ZAP70.

It belongs to the protein kinase superfamily. CMGC Ser/Thr protein kinase family. MAP kinase subfamily. Interacts with HDAC3 and DUSP16. Requires Mg(2+) as cofactor. Post-translationally, dually phosphorylated on Thr-180 and Tyr-182 by MAP2K3/MKK3, MAP2K4/MKK4 and MAP2K6/MKK6, which activates the enzyme. Highest levels in the brain and heart. Also expressed in the placenta, lung, liver, skeletal muscle, kidney and pancreas.

The protein resides in the cytoplasm. The protein localises to the nucleus. It carries out the reaction L-seryl-[protein] + ATP = O-phospho-L-seryl-[protein] + ADP + H(+). It catalyses the reaction L-threonyl-[protein] + ATP = O-phospho-L-threonyl-[protein] + ADP + H(+). With respect to regulation, activated by phosphorylation on threonine and tyrosine by MAP2K3/MKK3, MAP2K4/MKK4 and MAP2K6/MKK6. MAP2K3/MKK3 and MAP2K6/MKK6 are both essential for the activation of MAPK11 induced by environmental stress. HDAC3 interacts directly and selectively with MAPK11 to repress ATF2 transcriptional activity, and regulate TNF gene expression in LPS-stimulated cells. Inhibited by SB203580 and pyridinyl-imidazole related compounds. Serine/threonine kinase which acts as an essential component of the MAP kinase signal transduction pathway. MAPK11 is one of the four p38 MAPKs which play an important role in the cascades of cellular responses evoked by extracellular stimuli such as pro-inflammatory cytokines or physical stress leading to direct activation of transcription factors. Accordingly, p38 MAPKs phosphorylate a broad range of proteins and it has been estimated that they may have approximately 200 to 300 substrates each. MAPK11 functions are mostly redundant with those of MAPK14. Some of the targets are downstream kinases which are activated through phosphorylation and further phosphorylate additional targets. RPS6KA5/MSK1 and RPS6KA4/MSK2 can directly phosphorylate and activate transcription factors such as CREB1, ATF1, the NF-kappa-B isoform RELA/NFKB3, STAT1 and STAT3, but can also phosphorylate histone H3 and the nucleosomal protein HMGN1. RPS6KA5/MSK1 and RPS6KA4/MSK2 play important roles in the rapid induction of immediate-early genes in response to stress or mitogenic stimuli, either by inducing chromatin remodeling or by recruiting the transcription machinery. On the other hand, two other kinase targets, MAPKAPK2/MK2 and MAPKAPK3/MK3, participate in the control of gene expression mostly at the post-transcriptional level, by phosphorylating ZFP36 (tristetraprolin) and ELAVL1, and by regulating EEF2K, which is important for the elongation of mRNA during translation. MKNK1/MNK1 and MKNK2/MNK2, two other kinases activated by p38 MAPKs, regulate protein synthesis by phosphorylating the initiation factor EIF4E2. In the cytoplasm, the p38 MAPK pathway is an important regulator of protein turnover. For example, CFLAR is an inhibitor of TNF-induced apoptosis whose proteasome-mediated degradation is regulated by p38 MAPK phosphorylation. Ectodomain shedding of transmembrane proteins is regulated by p38 MAPKs as well. In response to inflammatory stimuli, p38 MAPKs phosphorylate the membrane-associated metalloprotease ADAM17. Such phosphorylation is required for ADAM17-mediated ectodomain shedding of TGF-alpha family ligands, which results in the activation of EGFR signaling and cell proliferation. Additional examples of p38 MAPK substrates are the FGFR1. FGFR1 can be translocated from the extracellular space into the cytosol and nucleus of target cells, and regulates processes such as rRNA synthesis and cell growth. FGFR1 translocation requires p38 MAPK activation. In the nucleus, many transcription factors are phosphorylated and activated by p38 MAPKs in response to different stimuli. Classical examples include ATF1, ATF2, ATF6, ELK1, PTPRH, DDIT3, TP53/p53 and MEF2C and MEF2A. The p38 MAPKs are emerging as important modulators of gene expression by regulating chromatin modifiers and remodelers. The promoters of several genes involved in the inflammatory response, such as IL6, IL8 and IL12B, display a p38 MAPK-dependent enrichment of histone H3 phosphorylation on 'Ser-10' (H3S10ph) in LPS-stimulated myeloid cells. This phosphorylation enhances the accessibility of the cryptic NF-kappa-B-binding sites marking promoters for increased NF-kappa-B recruitment. Phosphorylates NLRP1 downstream of MAP3K20/ZAK in response to UV-B irradiation and ribosome collisions, promoting activation of the NLRP1 inflammasome and pyroptosis. Phosphorylates methyltransferase DOT1L on 'Ser-834', 'Thr-900', 'Ser-902', 'Thr-984', 'Ser-1001', 'Ser-1009' and 'Ser-1104'. This chain is Mitogen-activated protein kinase 11 (MAPK11), found in Homo sapiens (Human).